We begin with the raw amino-acid sequence, 155 residues long: SsrA-binding protein (155 aa).

Belongs to the SmpB family.

It localises to the cytoplasm. Functionally, required for rescue of stalled ribosomes mediated by trans-translation. Binds to transfer-messenger RNA (tmRNA), required for stable association of tmRNA with ribosomes. tmRNA and SmpB together mimic tRNA shape, replacing the anticodon stem-loop with SmpB. tmRNA is encoded by the ssrA gene; the 2 termini fold to resemble tRNA(Ala) and it encodes a 'tag peptide', a short internal open reading frame. During trans-translation Ala-aminoacylated tmRNA acts like a tRNA, entering the A-site of stalled ribosomes, displacing the stalled mRNA. The ribosome then switches to translate the ORF on the tmRNA; the nascent peptide is terminated with the 'tag peptide' encoded by the tmRNA and targeted for degradation. The ribosome is freed to recommence translation, which seems to be the essential function of trans-translation. The chain is SsrA-binding protein from Streptococcus agalactiae serotype Ia (strain ATCC 27591 / A909 / CDC SS700).